Reading from the N-terminus, the 294-residue chain is Cell division control protein 2 homolog 2 (294 aa).

One can recognise a Protein kinase domain in the interval 4–287; sequence YEKVEKIGEG…ARGALEHEYF (284 aa). ATP contacts are provided by residues 10–18 and lysine 33; that span reads IGEGTYGVV. Threonine 14 bears the Phosphothreonine mark. At tyrosine 15 the chain carries Phosphotyrosine. Aspartate 127 functions as the Proton acceptor in the catalytic mechanism. Residue threonine 161 is modified to Phosphothreonine; by CAK.

This sequence belongs to the protein kinase superfamily. CMGC Ser/Thr protein kinase family. CDC2/CDKX subfamily. Found in most organs including root, young leaf, stem, vegetative meristem and flower bud.

The enzyme catalyses L-seryl-[protein] + ATP = O-phospho-L-seryl-[protein] + ADP + H(+). It catalyses the reaction L-threonyl-[protein] + ATP = O-phospho-L-threonyl-[protein] + ADP + H(+). Its activity is regulated as follows. Phosphorylation at Thr-14 or Tyr-15 inactivates the enzyme, while phosphorylation at Thr-161 activates it. Plays a key role in the control of the eukaryotic cell cycle. Component of the kinase complex that phosphorylates the repetitive C-terminus of RNA polymerase II. The chain is Cell division control protein 2 homolog 2 (CDC2B) from Medicago sativa (Alfalfa).